Here is a 220-residue protein sequence, read N- to C-terminus: Endonuclease NucS (220 aa).

This sequence belongs to the NucS endonuclease family.

It localises to the cytoplasm. In terms of biological role, cleaves both 3' and 5' ssDNA extremities of branched DNA structures. The protein is Endonuclease NucS of Parafrankia sp. (strain EAN1pec).